Here is a 279-residue protein sequence, read N- to C-terminus: MKKMVNIGFIKMGNLGMSQVINLIQDEIAAREGITVRVFGTGAKMAPADAADTESFKQWNADFVVIISPNAAAPGPTAAREIWKDVPCIIVSDGPTKKEAREAFEQEGFGYIILPVDPLIGAKREFLDSVEMASFNADAMKVLSICGVVRLIQEELDKVTEQVASGKSGKDLELPHIFAKPEKCVEHAGFANPYAKSKALAALHMAEKVAQVNFPACFMLKEIEQVCLTAAAGHEIMGAAAQLANQAREIEKSNDTVSRMPHAKNGAVLKKVRLYEKPE.

Belongs to the MTD family.

It carries out the reaction 5,10-methylenetetrahydromethanopterin + oxidized coenzyme F420-(gamma-L-Glu)(n) + 2 H(+) = 5,10-methenyl-5,6,7,8-tetrahydromethanopterin + reduced coenzyme F420-(gamma-L-Glu)(n). The protein operates within one-carbon metabolism; methanogenesis from CO(2); 5,10-methylene-5,6,7,8-tetrahydromethanopterin from 5,10-methenyl-5,6,7,8-tetrahydromethanopterin (coenzyme F420 route): step 1/1. In terms of biological role, catalyzes the reversible reduction of methenyl-H(4)MPT(+) to methylene-H(4)MPT. The polypeptide is F420-dependent methylenetetrahydromethanopterin dehydrogenase (mtd) (Methanosarcina mazei (strain ATCC BAA-159 / DSM 3647 / Goe1 / Go1 / JCM 11833 / OCM 88) (Methanosarcina frisia)).